A 684-amino-acid chain; its full sequence is MYGITGNGYRLVSSYSPKGDQPKAIEQLVEGVQRGDRWQTLLGVTGSGKTFTISNLIAQVGKPVLVMSHNKTLAAQLYGELRQFFPDNAVEYFISYYDFYQPEAYLPALDKYIAKDLRINDEIERLRLKATSSLLSGRRDVIVVSSVSCIYGLGSPEEWKAQIIELRPGMEKDRDQFLQELVSLHYVRDDMKPGPGKFRVRGDIIDLVPAHEELAVRVEFFGPEIESLQTFDMQSGEVLGRDDYAFIYPARQFVAGEEQMRHAMLAIENELAGRLNELRGENRLIEARRLEERTRYDLEMMKELGYCSGIENYSRHLAGREPGDRPHCLLDYFPEDYLVVVDESHVTLPQIRGMYGGDRSRKTILVEHGFRLPSALDNRPLRFDEYVGLVPQVVCVSATPGDLELEYSGGVIVEQLVRPTGLLDPPVEVRPVKGQIDDLLGEIRKHTARGFKALIMTLTKRMSEDLDDYFRKTGIRSRYLHSEIKSLERMQILRELRTGEIDVLVGVNLLREGLDLPEVSLVAILDADKEGFLRNTRSLMQIAGRAARNSEGFVVLYADVLTRSIREVLDETSRRRKIQQAYNEEHGIVPQSIIKSVEQVLNTTGVADAEERYRRKRFGLEPKPERLLSTLIDTLTAEECYSMAESLRLEMQEAALKMEYEKAAYLRDEITKFEHRANEAGKGI.

The Helicase ATP-binding domain maps to 30 to 188 (EGVQRGDRWQ…QELVSLHYVR (159 aa)). 43 to 50 (GVTGSGKT) serves as a coordination point for ATP. Residues 96–119 (YYDFYQPEAYLPALDKYIAKDLRI) carry the Beta-hairpin motif. In terms of domain architecture, Helicase C-terminal spans 435 to 601 (QIDDLLGEIR…SIIKSVEQVL (167 aa)). The region spanning 641–676 (YSMAESLRLEMQEAALKMEYEKAAYLRDEITKFEHR) is the UVR domain.

This sequence belongs to the UvrB family. In terms of assembly, forms a heterotetramer with UvrA during the search for lesions. Interacts with UvrC in an incision complex.

It localises to the cytoplasm. The UvrABC repair system catalyzes the recognition and processing of DNA lesions. A damage recognition complex composed of 2 UvrA and 2 UvrB subunits scans DNA for abnormalities. Upon binding of the UvrA(2)B(2) complex to a putative damaged site, the DNA wraps around one UvrB monomer. DNA wrap is dependent on ATP binding by UvrB and probably causes local melting of the DNA helix, facilitating insertion of UvrB beta-hairpin between the DNA strands. Then UvrB probes one DNA strand for the presence of a lesion. If a lesion is found the UvrA subunits dissociate and the UvrB-DNA preincision complex is formed. This complex is subsequently bound by UvrC and the second UvrB is released. If no lesion is found, the DNA wraps around the other UvrB subunit that will check the other stand for damage. This Chlorobium limicola (strain DSM 245 / NBRC 103803 / 6330) protein is UvrABC system protein B.